Here is a 119-residue protein sequence, read N- to C-terminus: Large ribosomal subunit protein bL20 (119 aa).

It belongs to the bacterial ribosomal protein bL20 family.

Its function is as follows. Binds directly to 23S ribosomal RNA and is necessary for the in vitro assembly process of the 50S ribosomal subunit. It is not involved in the protein synthesizing functions of that subunit. The protein is Large ribosomal subunit protein bL20 of Geobacillus thermodenitrificans (strain NG80-2).